A 434-amino-acid polypeptide reads, in one-letter code: Na(+)/H(+) antiporter NhaA 1 (434 aa).

Helical transmembrane passes span 30–50 (TGGL…NVAG), 70–90 (LSIE…VTGL), 108–128 (ALPI…FVLV), 141–161 (VGWA…LAVV), 172–192 (FLLT…AIFY), 195–215 (QVHW…TVAV), 286–306 (FAVP…VSGF), 318–338 (VIAG…WLLA), 354–374 (VLGM…IGSL), and 386–406 (VTLG…VVLS).

It belongs to the NhaA Na(+)/H(+) (TC 2.A.33) antiporter family.

The protein localises to the cell membrane. It catalyses the reaction Na(+)(in) + 2 H(+)(out) = Na(+)(out) + 2 H(+)(in). Na(+)/H(+) antiporter that extrudes sodium in exchange for external protons. This chain is Na(+)/H(+) antiporter NhaA 1, found in Kineococcus radiotolerans (strain ATCC BAA-149 / DSM 14245 / SRS30216).